We begin with the raw amino-acid sequence, 183 residues long: Pyruvoyl-dependent arginine decarboxylase 2 (183 aa).

S41 bears the Pyruvic acid (Ser) mark.

Belongs to the PdaD family. It depends on pyruvate as a cofactor.

It catalyses the reaction L-arginine + H(+) = agmatine + CO2. In Methanosarcina acetivorans (strain ATCC 35395 / DSM 2834 / JCM 12185 / C2A), this protein is Pyruvoyl-dependent arginine decarboxylase 2 (pdaD2).